The primary structure comprises 417 residues: MADIKNYTLNFGPQHPAAHGVLRLVLELDGEVIQRADPHIGLLHRATEKLAEQKTWIQSVPYMDRLDYVSMMVNEHAYVMAIERLLGLEVPLRAQYIRVMFDEITRIMNHLMWIGSHALDVGAMAVFLYAFREREDLFDMYEAVSGARMHAAYYRPGGVYRDLPDTMPQYKASKVRNEKALAALNQTRSGSLLDFIEDFTNRFPKYVDEYETLLTDNRIWKQRLVGIGVVSPERALNKGFSGAMLRGSGIEWDVRKKQPYEVYDRIDFDIPVGVNGDCYDRYLVRVEEMRQSNRIIRQCIEWLRKNPGPVITDNHKVAPPSRVDMKTNMEELIHHFKLFTEGMHVPEGEAYAAVEHPKGEFGIYAISDGANKPYRLKIRAPGFVHLAALDEMAKGHMIADAVTIIGTQDIVFGEIDR.

Belongs to the complex I 49 kDa subunit family. As to quaternary structure, NDH-1 is composed of 14 different subunits. Subunits NuoB, C, D, E, F, and G constitute the peripheral sector of the complex.

The protein resides in the cell inner membrane. It catalyses the reaction a quinone + NADH + 5 H(+)(in) = a quinol + NAD(+) + 4 H(+)(out). Functionally, NDH-1 shuttles electrons from NADH, via FMN and iron-sulfur (Fe-S) centers, to quinones in the respiratory chain. The immediate electron acceptor for the enzyme in this species is believed to be ubiquinone. Couples the redox reaction to proton translocation (for every two electrons transferred, four hydrogen ions are translocated across the cytoplasmic membrane), and thus conserves the redox energy in a proton gradient. In Ralstonia pickettii (strain 12J), this protein is NADH-quinone oxidoreductase subunit D.